A 407-amino-acid polypeptide reads, in one-letter code: MARKKIREYDSKRLLKEHLKRLAGIDLQILSAQVTQSTDFTELVNQQPWLSTMKLVVKPDMLFGKRGKSGLVALNLDIAQVKEFVKERLGVEVEMGGCKAPITTFIVEPFVPHDQEYYLSIVSERLGSTISFSECGGIEIEENWDKVKTIFLSTEKPMTPDACAPLIATLPLEARGKIGDFIKGVFAVFQDLDFSFLEMNPFTIVNGEPYPLDMRGELDDTAAFKTSRSKWGNIEFPLPFGRVLSSTEGFIHDLDEKTSASLKFTVLNPKGRIWTMVAGGELENYAEYSGAPNEEEVLQYARVVLDCATADPDGRKRALLIGGGIANFTDVGATFSGIIRALREKESKLKAARMHIYVRRGGPNYQTGLAKMRKLGAELGVPIEVYGPEATMTGICKQAIECVMAAA.

Citrate-binding residues include Asn-327, Thr-329, and Arg-360.

The protein belongs to the succinate/malate CoA ligase beta subunit family. Heterooctamer of 4 alpha and 4 beta chains.

The protein resides in the cytoplasm. It localises to the cytosol. It carries out the reaction oxaloacetate + acetyl-CoA + ADP + phosphate = citrate + ATP + CoA. ATP citrate-lyase is the primary enzyme responsible for the synthesis of cytosolic acetyl-CoA, used for the elongation of fatty acids and biosynthesis of isoprenoids, flavonoids and malonated derivatives. May supply substrate to the cytosolic acetyl-CoA carboxylase, which generates the malonyl-CoA used for the synthesis of a multitude of compounds, including very long chain fatty acids and flavonoids. In contrast to all known animal ACL enzymes having a homomeric structure, plant ACLs are composed of alpha and beta chains. This is ATP-citrate synthase subunit alpha chain protein 1 (ACLA-1) from Oryza sativa subsp. japonica (Rice).